Reading from the N-terminus, the 316-residue chain is Cell division protein ZipA (316 aa).

Residues 1-5 are Periplasmic-facing; sequence MQELR. A helical transmembrane segment spans residues 6 to 26; that stretch reads FVLIVVGALAIAALLFHGLWS. At 27–316 the chain is on the cytoplasmic side; the sequence is SKKEGKAKFG…QIVEFNAANA (290 aa). Residues 36-65 form a disordered region; that stretch reads GNKPLGKLDVDQGDKDSVEQERSFAPATED. Over residues 41 to 57 the composition is skewed to basic and acidic residues; sequence GKLDVDQGDKDSVEQER.

Belongs to the ZipA family. In terms of assembly, interacts with FtsZ via their C-terminal domains.

The protein localises to the cell inner membrane. Essential cell division protein that stabilizes the FtsZ protofilaments by cross-linking them and that serves as a cytoplasmic membrane anchor for the Z ring. Also required for the recruitment to the septal ring of downstream cell division proteins. This chain is Cell division protein ZipA, found in Vibrio parahaemolyticus serotype O3:K6 (strain RIMD 2210633).